A 297-amino-acid polypeptide reads, in one-letter code: Halorhodopsin (297 aa).

The segment at 1 to 31 (MRSRTYHDQSVCGPYGSQRTDCDRDTDAGSD) is disordered. The Extracellular portion of the chain corresponds to 1 to 45 (MRSRTYHDQSVCGPYGSQRTDCDRDTDAGSDTDVHGAQVATQIRT). The chain crosses the membrane as a helical span at residues 46–71 (DTLLHSSLWVNIALAGLSILVFLYMA). Over 72–77 (RTVRAN) the chain is Cytoplasmic. The helical transmembrane segment at 78-101 (RARLIVGATLMIPLVSLSSYLGLV) threads the bilayer. At 102-125 (TGLTAGPIEMPAAHALAGEDVLSQ) the chain is on the extracellular side. The chain crosses the membrane as a helical span at residues 126 to 147 (WGRYLTWTLSTPMILLALGWLA). The Cytoplasmic portion of the chain corresponds to 148 to 150 (EVD). The chain crosses the membrane as a helical span at residues 151–174 (TADLFVVIAADIGMCLTGLAAALT). Residues 175–177 (TSS) lie on the Extracellular side of the membrane. A helical membrane pass occupies residues 178–200 (YAFRWAFYLVSTAFFVVVLYALL). The Cytoplasmic portion of the chain corresponds to 201 to 212 (AKWPTNAEAAGT). Residues 213–236 (GDIFGTLRWLTVILWLGYPILWAL) form a helical membrane-spanning segment. Topologically, residues 237-246 (GVEGFALVDS) are extracellular. A helical membrane pass occupies residues 247 to 275 (VGLTSWGYSLLDIGAKYLFAALLLRWVAN). Lysine 262 is modified (N6-(retinylidene)lysine). Over 276 to 297 (NERTIAVGQRSGRGAIGDPVED) the chain is Cytoplasmic.

It belongs to the archaeal/bacterial/fungal opsin family.

It localises to the cell membrane. Light-driven chloride pump. The chain is Halorhodopsin (hop) from Haloterrigena sp. (strain arg-4).